Here is a 319-residue protein sequence, read N- to C-terminus: Acetyl-coenzyme A carboxylase carboxyl transferase subunit alpha (319 aa).

The 255-residue stretch at 39-293 (RLQKKSNDLT…KAVLEKQLHE (255 aa)) folds into the CoA carboxyltransferase C-terminal domain.

This sequence belongs to the AccA family. In terms of assembly, acetyl-CoA carboxylase is a heterohexamer composed of biotin carboxyl carrier protein (AccB), biotin carboxylase (AccC) and two subunits each of ACCase subunit alpha (AccA) and ACCase subunit beta (AccD).

It is found in the cytoplasm. The enzyme catalyses N(6)-carboxybiotinyl-L-lysyl-[protein] + acetyl-CoA = N(6)-biotinyl-L-lysyl-[protein] + malonyl-CoA. Its pathway is lipid metabolism; malonyl-CoA biosynthesis; malonyl-CoA from acetyl-CoA: step 1/1. In terms of biological role, component of the acetyl coenzyme A carboxylase (ACC) complex. First, biotin carboxylase catalyzes the carboxylation of biotin on its carrier protein (BCCP) and then the CO(2) group is transferred by the carboxyltransferase to acetyl-CoA to form malonyl-CoA. The polypeptide is Acetyl-coenzyme A carboxylase carboxyl transferase subunit alpha (Neisseria meningitidis serogroup B (strain ATCC BAA-335 / MC58)).